We begin with the raw amino-acid sequence, 315 residues long: Ribosomal RNA small subunit methyltransferase H (315 aa).

Residues 32–34, Asp-52, Phe-78, Asp-100, and Gln-107 contribute to the S-adenosyl-L-methionine site; that span reads GGH.

The protein belongs to the methyltransferase superfamily. RsmH family.

The protein resides in the cytoplasm. The catalysed reaction is cytidine(1402) in 16S rRNA + S-adenosyl-L-methionine = N(4)-methylcytidine(1402) in 16S rRNA + S-adenosyl-L-homocysteine + H(+). Its function is as follows. Specifically methylates the N4 position of cytidine in position 1402 (C1402) of 16S rRNA. In Psychromonas ingrahamii (strain DSM 17664 / CCUG 51855 / 37), this protein is Ribosomal RNA small subunit methyltransferase H.